Consider the following 121-residue polypeptide: RxLR effector protein PexRD2 (121 aa).

The signal sequence occupies residues Met1–Ala18. The RxLR-dEER motif lies at Arg38–Arg56. The tract at residues Ala57 to Val121 is WY domain.

This sequence belongs to the RxLR effector family.

It localises to the secreted. It is found in the host cytoplasm. The protein resides in the host nucleus. Functionally, secreted effector involved in P.mirabilis colonization of host plants. May perturb the signaling of cell death associated with plant immunity, via interaction with a host MAP kinase. This chain is RxLR effector protein PexRD2, found in Phytophthora mirabilis.